The following is a 796-amino-acid chain: Protocadherin beta-3 (796 aa).

Residues 1–26 form the signal peptide; the sequence is MEAGGERFLRQRQVLLLFVFLGGSLA. The Extracellular portion of the chain corresponds to 27–690; the sequence is GSESRRYSVA…AQADLLTVYL (664 aa). Cadherin domains are found at residues 35–133, 138–242, 247–347, 352–451, and 456–561; these read VAEE…SPVF, MHLK…APEF, YEVA…PPEL, VNSP…APAF, and YTLF…SPFV. Asn169 is a glycosylation site (N-linked (GlcNAc...) asparagine). N-linked (GlcNAc...) asparagine glycans are attached at residues Asn418 and Asn436. An N-linked (GlcNAc...) asparagine glycan is attached at Asn567. The Cadherin 6 domain occupies 568–671; sequence GSAPCTELVP…LVDGFSQPYL (104 aa). Residues 691–711 traverse the membrane as a helical segment; sequence VVALASVSSLFLFSVLLFVAV. Over 712–796 the chain is Cytoplasmic; it reads RLCRRSRAAS…PSFRKSFEFS (85 aa).

The protein resides in the cell membrane. Functionally, potential calcium-dependent cell-adhesion protein. May be involved in the establishment and maintenance of specific neuronal connections in the brain. The sequence is that of Protocadherin beta-3 (PCDHB3) from Pan troglodytes (Chimpanzee).